A 235-amino-acid chain; its full sequence is NAD-dependent protein deacylase (235 aa).

In terms of domain architecture, Deacetylase sirtuin-type spans 1 to 235 (MDLRLFKNIV…VPRFITQFLE (235 aa)). An NAD(+)-binding site is contributed by 14–33 (GAGISAESGIRTFRDQDGLW). Substrate is bound by residues Tyr-58 and Arg-61. Residue 95–98 (QNVD) coordinates NAD(+). His-113 (proton acceptor) is an active-site residue. Positions 121, 124, 140, and 143 each coordinate Zn(2+). NAD(+)-binding positions include 180 to 182 (GTS), 204 to 206 (NLK), and Ala-222.

This sequence belongs to the sirtuin family. Class III subfamily. Zn(2+) serves as cofactor.

The protein resides in the cytoplasm. It catalyses the reaction N(6)-acetyl-L-lysyl-[protein] + NAD(+) + H2O = 2''-O-acetyl-ADP-D-ribose + nicotinamide + L-lysyl-[protein]. The enzyme catalyses N(6)-succinyl-L-lysyl-[protein] + NAD(+) + H2O = 2''-O-succinyl-ADP-D-ribose + nicotinamide + L-lysyl-[protein]. In terms of biological role, NAD-dependent lysine deacetylase and desuccinylase that specifically removes acetyl and succinyl groups on target proteins. Modulates the activities of several proteins which are inactive in their acylated form. This chain is NAD-dependent protein deacylase, found in Bdellovibrio bacteriovorus (strain ATCC 15356 / DSM 50701 / NCIMB 9529 / HD100).